A 454-amino-acid polypeptide reads, in one-letter code: GTPase Obg (454 aa).

Positions 2–159 (SDFVDEAVLH…VDIRLELKTI (158 aa)) constitute an Obg domain. The tract at residues 60–87 (YQRRPHRKAENGAPGQGSNRSGASGADL) is disordered. Positions 160-335 (ADVGLVGFPS…LAYALGEQVA (176 aa)) constitute an OBG-type G domain. Residues 166 to 173 (GFPSAGKS), 191 to 195 (FTTLV), 212 to 215 (DVPG), 287 to 290 (NKID), and 316 to 318 (SAA) contribute to the GTP site. Mg(2+)-binding residues include Ser-173 and Thr-193. Residues 353-435 (PREIGEIPFQ…DNPVVFDWDP (83 aa)) form the OCT domain.

It belongs to the TRAFAC class OBG-HflX-like GTPase superfamily. OBG GTPase family. In terms of assembly, monomer. The cofactor is Mg(2+).

Its subcellular location is the cytoplasm. Its function is as follows. An essential GTPase which binds GTP, GDP and possibly (p)ppGpp with moderate affinity, with high nucleotide exchange rates and a fairly low GTP hydrolysis rate. Plays a role in control of the cell cycle, stress response, ribosome biogenesis and in those bacteria that undergo differentiation, in morphogenesis control. In Thermobifida fusca (strain YX), this protein is GTPase Obg.